The following is a 305-amino-acid chain: Oxygen-dependent coproporphyrinogen-III oxidase (305 aa).

S92 contributes to the substrate binding site. Residues H96 and H106 each contribute to the a divalent metal cation site. Residue H106 is the Proton donor of the active site. Position 108–110 (108–110) interacts with substrate; that stretch reads NVR. The a divalent metal cation site is built by H145 and H175. The segment at 239–274 is important for dimerization; it reads YVEFNLLFDRGTLFGLQSGGRAESILISLPPLVRWE. Residue 257–259 participates in substrate binding; sequence GGR.

This sequence belongs to the aerobic coproporphyrinogen-III oxidase family. Homodimer. It depends on a divalent metal cation as a cofactor.

It is found in the cytoplasm. It catalyses the reaction coproporphyrinogen III + O2 + 2 H(+) = protoporphyrinogen IX + 2 CO2 + 2 H2O. Its pathway is porphyrin-containing compound metabolism; protoporphyrin-IX biosynthesis; protoporphyrinogen-IX from coproporphyrinogen-III (O2 route): step 1/1. Functionally, involved in the heme biosynthesis. Catalyzes the aerobic oxidative decarboxylation of propionate groups of rings A and B of coproporphyrinogen-III to yield the vinyl groups in protoporphyrinogen-IX. The chain is Oxygen-dependent coproporphyrinogen-III oxidase from Xylella fastidiosa (strain M12).